We begin with the raw amino-acid sequence, 90 residues long: DNA-binding protein HU-beta (90 aa).

The protein belongs to the bacterial histone-like protein family. As to quaternary structure, heterodimer of an alpha and a beta chain.

Its function is as follows. Histone-like DNA-binding protein which is capable of wrapping DNA to stabilize it, and thus to prevent its denaturation under extreme environmental conditions. The protein is DNA-binding protein HU-beta (hupB) of Pseudomonas aeruginosa (strain ATCC 15692 / DSM 22644 / CIP 104116 / JCM 14847 / LMG 12228 / 1C / PRS 101 / PAO1).